Here is a 359-residue protein sequence, read N- to C-terminus: Molybdenum import ATP-binding protein ModC (359 aa).

In terms of domain architecture, ABC transporter spans 1–233 (MSGLTVSIRG…IDAESEGGGV (233 aa)). 32-39 (GHSGAGKT) contributes to the ATP binding site. Residues 289–355 (AISIRNLLPV…VKAVSVDRAA (67 aa)) enclose the Mop domain.

This sequence belongs to the ABC transporter superfamily. Molybdate importer (TC 3.A.1.8) family. As to quaternary structure, the complex is composed of two ATP-binding proteins (ModC), two transmembrane proteins (ModB) and a solute-binding protein (ModA).

It is found in the cell inner membrane. The enzyme catalyses molybdate(out) + ATP + H2O = molybdate(in) + ADP + phosphate + H(+). In terms of biological role, part of the ABC transporter complex ModABC involved in molybdenum import. Responsible for energy coupling to the transport system. This is Molybdenum import ATP-binding protein ModC from Brucella abortus (strain 2308).